Reading from the N-terminus, the 560-residue chain is Eukaryotic translation initiation factor 3 subunit D-1 (560 aa).

Residues 98–166 (VQKPPHQRGR…RGPPPKMRES (69 aa)) form a disordered region. Residues 100–121 (KPPHQRGRFRNMRNSRSGRGRN) show a composition bias toward basic residues. Position 128 is a phosphothreonine (Thr128). The span at 147-156 (GRGMGKKFGH) shows a compositional bias: basic residues. Residues 291 to 305 (EFDLLTVNESSVEPP) form an RNA gate region.

This sequence belongs to the eIF-3 subunit D family. In terms of assembly, component of the eukaryotic translation initiation factor 3 (eIF-3) complex. The eIF-3 complex interacts with pix.

Its subcellular location is the cytoplasm. Functionally, mRNA cap-binding component of the eukaryotic translation initiation factor 3 (eIF-3) complex, which is involved in protein synthesis of a specialized repertoire of mRNAs and, together with other initiation factors, stimulates binding of mRNA and methionyl-tRNAi to the 40S ribosome. The eIF-3 complex specifically targets and initiates translation of a subset of mRNAs involved in cell proliferation. In the eIF-3 complex, eif3d specifically recognizes and binds the 7-methylguanosine cap of a subset of mRNAs. The polypeptide is Eukaryotic translation initiation factor 3 subunit D-1 (Drosophila melanogaster (Fruit fly)).